The primary structure comprises 737 residues: Polyribonucleotide nucleotidyltransferase (737 aa).

Aspartate 489 and aspartate 495 together coordinate Mg(2+). A KH domain is found at 556–615 (PKIDTIKIDVDKIKIVIGKGGETIDKIIAETGVKIDIDEEGNVSIYSSDQDAINRAKEII). Residues 625–693 (DEVYRAKVVR…EKGRIDASMK (69 aa)) enclose the S1 motif domain. The segment at 691–737 (SMKALLPRPPKPEHDEKGEKSERPHRPRHHKDHKPKKEFTETPKDSE) is disordered. Residues 700–714 (PKPEHDEKGEKSERP) show a composition bias toward basic and acidic residues. Residues 715–724 (HRPRHHKDHK) are compositionally biased toward basic residues. Basic and acidic residues predominate over residues 725-737 (PKKEFTETPKDSE).

It belongs to the polyribonucleotide nucleotidyltransferase family. It depends on Mg(2+) as a cofactor.

It localises to the cytoplasm. The enzyme catalyses RNA(n+1) + phosphate = RNA(n) + a ribonucleoside 5'-diphosphate. In terms of biological role, involved in mRNA degradation. Catalyzes the phosphorolysis of single-stranded polyribonucleotides processively in the 3'- to 5'-direction. The polypeptide is Polyribonucleotide nucleotidyltransferase (Streptococcus pneumoniae (strain ATCC 700669 / Spain 23F-1)).